The following is a 471-amino-acid chain: Tryptophanase (471 aa).

An N6-(pyridoxal phosphate)lysine modification is found at Lys256.

The protein belongs to the beta-eliminating lyase family. As to quaternary structure, homotetramer. Requires pyridoxal 5'-phosphate as cofactor.

It catalyses the reaction L-tryptophan + H2O = indole + pyruvate + NH4(+). It participates in amino-acid degradation; L-tryptophan degradation via pyruvate pathway; indole and pyruvate from L-tryptophan: step 1/1. This is Tryptophanase from Salinibacter ruber (strain DSM 13855 / M31).